We begin with the raw amino-acid sequence, 485 residues long: L-ornithine N(5)-oxygenase (485 aa).

FAD contacts are provided by residues 49 to 57 (ERQQQFVWH) and Gln68. Residue Lys73 coordinates L-ornithine. Residue Val134 coordinates FAD. Residue Arg243 participates in NADP(+) binding. L-ornithine contacts are provided by residues 257–260 (NEIF) and Asn287. NADP(+) is bound at residue 287–289 (NYS). 425–427 (TLL) contributes to the FAD binding site. Ser428 serves as a coordination point for L-ornithine.

This sequence belongs to the lysine N(6)-hydroxylase/L-ornithine N(5)-oxygenase family. Homotetramer. FAD is required as a cofactor.

It carries out the reaction L-ornithine + NADH + O2 = N(5)-hydroxy-L-ornithine + NAD(+) + H2O. The enzyme catalyses L-ornithine + NADPH + O2 = N(5)-hydroxy-L-ornithine + NADP(+) + H2O. It functions in the pathway siderophore biosynthesis. Its function is as follows. L-ornithine N(5)-oxygenase; part of the gene cluster that mediates the biosynthesis of desferriferrichrome that chelates Fe(3+) to form ferrichrome. Fe(3+) is a key factor for induction of trap formation and the fungus uses the iron chelating desferriferrichrome to sequester Fe(3+) to inhibit trap formation and increase nematicidal activity. The biosynthesis of desferriferrichrome requires the action of the L-ornithine N(5)-oxygenase (LOO) Ao414 that hydroxylates L-ornithine at N(5), resulting in the formation of N(5)-hydroxyl-L-ornithine, which is subsequently N-acetylated to yield N(5)-acetyl-N(5)-hydroxy-L-ornithine (L-AHO). L-AHO harbors one hydroxamate moiety, which is the key core responsible for chelating iron. Then, L-AHO is further condensated with glycines to form desferriferrichrome through the NRPS protein Ao415. The chain is L-ornithine N(5)-oxygenase from Arthrobotrys oligospora (strain ATCC 24927 / CBS 115.81 / DSM 1491) (Nematode-trapping fungus).